The following is a 206-amino-acid chain: Ras-related protein Ral-B (206 aa).

21–29 (GSGGVGKSA) is a GTP binding site. Positions 43–51 (YEPTKADSY) match the Effector region motif. GTP-binding positions include 68-72 (DTAGQ), 128-131 (NKSD), and 158-160 (SAK). Positions 181-206 (MSENKDKNGRKSGKSKKSFKERCCLL) are disordered. The residue at position 203 (Cys203) is a Cysteine methyl ester. The S-geranylgeranyl cysteine moiety is linked to residue Cys203. Residues 204–206 (CLL) constitute a propeptide, removed in mature form.

It belongs to the small GTPase superfamily. Ras family. As to quaternary structure, interacts with EXOC2/Sec5 and EXOC8/Exo84. Interacts (via effector domain) with RALBP1. Prenylation is essential for membrane localization. Post-translationally, the farnesylated form confers resistance to the proapoptotic and anti-anchorage-dependent growth effects of some geranylgeranyltransferase I inhibitors.

Its subcellular location is the cell membrane. The protein resides in the midbody. It carries out the reaction GTP + H2O = GDP + phosphate + H(+). Its activity is regulated as follows. Alternates between an inactive form bound to GDP and an active form bound to GTP. Activated by a guanine nucleotide-exchange factor (GEF) and inactivated by a GTPase-activating protein (GAP). In terms of biological role, multifunctional GTPase involved in a variety of cellular processes including gene expression, cell migration, cell proliferation, oncogenic transformation and membrane trafficking. Accomplishes its multiple functions by interacting with distinct downstream effectors. Acts as a GTP sensor for GTP-dependent exocytosis of dense core vesicles. Required both to stabilize the assembly of the exocyst complex and to localize functional exocyst complexes to the leading edge of migrating cells. Required for suppression of apoptosis. In late stages of cytokinesis, upon completion of the bridge formation between dividing cells, mediates exocyst recruitment to the midbody to drive abscission. Involved in ligand-dependent receptor mediated endocytosis of the EGF and insulin receptors. The chain is Ras-related protein Ral-B (Ralb) from Rattus norvegicus (Rat).